The sequence spans 956 residues: RNA-silencing factor ers1 (956 aa).

It is found in the cytoplasm. The protein localises to the cytoskeleton. Its subcellular location is the microtubule organizing center. It localises to the spindle pole body. Involved in RNAi-dependent heterochromatin formation and centromeric silencing. Required for the conversion of centromeric pre-small interfering RNA transcripts into small interfering RNAs, histone H3 'Lys9' methylation, and the recruitment of the RITS complex to centromeric sequences. The chain is RNA-silencing factor ers1 (ers1) from Schizosaccharomyces pombe (strain 972 / ATCC 24843) (Fission yeast).